Here is a 1178-residue protein sequence, read N- to C-terminus: Phytochrome B (1178 aa).

The segment covering 1–15 (MASGSRATPTRSPSS) has biased composition (polar residues). A disordered region spans residues 1 to 58 (MASGSRATPTRSPSSARPEAPRHAHHHHHHHSQSSGGSTSRAGGGGGGGGGGGGTAAT). The segment covering 23-32 (HAHHHHHHHS) has biased composition (basic residues). Residues 42–55 (AGGGGGGGGGGGGT) show a composition bias toward gly residues. One can recognise a GAF domain in the interval 267–449 (DIKLLCDTVV…AFGLQLNMEL (183 aa)). C372 is a phytochromobilin binding site. PAS domains are found at residues 668–739 (VARE…LRGE) and 802–873 (DYKA…MVVI). One can recognise a Histidine kinase domain in the interval 950–1170 (YICQEIKNPL…LIVLELPQPR (221 aa)).

Belongs to the phytochrome family. Homodimer. In terms of processing, contains one covalently linked phytochromobilin chromophore.

Regulatory photoreceptor which exists in two forms that are reversibly interconvertible by light: the Pr form that absorbs maximally in the red region of the spectrum and the Pfr form that absorbs maximally in the far-red region. Photoconversion of Pr to Pfr induces an array of morphogenic responses, whereas reconversion of Pfr to Pr cancels the induction of those responses. Pfr controls the expression of a number of nuclear genes including those encoding the small subunit of ribulose-bisphosphate carboxylase, chlorophyll A/B binding protein, protochlorophyllide reductase, rRNA, etc. It also controls the expression of its own gene(s) in a negative feedback fashion. In Sorghum bicolor (Sorghum), this protein is Phytochrome B (PHYB).